A 199-amino-acid chain; its full sequence is Melanocortin-2 receptor accessory protein 2B (199 aa).

N-linked (GlcNAc...) asparagine glycosylation is present at N6. Residues 39–59 (IVIGFWVGLAVFVIFMFFVLT) traverse the membrane as a helical segment.

Belongs to the MRAP family. As to quaternary structure, interacts with mc4r. In terms of tissue distribution, expressed in adult brain.

It localises to the cell membrane. Its subcellular location is the endoplasmic reticulum membrane. Its function is as follows. Activator of melanocortin receptor 4 (mc4r), a receptor involved in energy homeostasis. Plays a role after larval development in the control of energy homeostasis and body weight regulation by increasing ligand-sensitivity of mc4r and mc4r-mediated generation of cAMP once the zebrafish begins feeding, increasing the capacity for regulated feeding and growth. This chain is Melanocortin-2 receptor accessory protein 2B (mrap2b), found in Danio rerio (Zebrafish).